Here is a 328-residue protein sequence, read N- to C-terminus: tRNA dimethylallyltransferase (328 aa).

10-17 (GPTASGKT) provides a ligand contact to ATP. Substrate is bound at residue 12-17 (TASGKT).

The protein belongs to the IPP transferase family. As to quaternary structure, monomer. It depends on Mg(2+) as a cofactor.

It carries out the reaction adenosine(37) in tRNA + dimethylallyl diphosphate = N(6)-dimethylallyladenosine(37) in tRNA + diphosphate. Its function is as follows. Catalyzes the transfer of a dimethylallyl group onto the adenine at position 37 in tRNAs that read codons beginning with uridine, leading to the formation of N6-(dimethylallyl)adenosine (i(6)A). In Bifidobacterium longum subsp. infantis (strain ATCC 15697 / DSM 20088 / JCM 1222 / NCTC 11817 / S12), this protein is tRNA dimethylallyltransferase.